Here is a 323-residue protein sequence, read N- to C-terminus: Cytochrome c biogenesis protein CcsA (323 aa).

Helical transmembrane passes span 9–29 (ILTH…LLNL), 45–62 (MMAT…RWIY), 71–91 (LYES…VPYF), 98–118 (LSAI…SGLL), 143–163 (MLLG…LLVI), 227–247 (IISL…VWAN), 261–275 (TWAF…IYLH), and 285–305 (VGPA…YFGV).

This sequence belongs to the CcmF/CycK/Ccl1/NrfE/CcsA family. May interact with Ccs1.

The protein resides in the plastid. It is found in the chloroplast thylakoid membrane. In terms of biological role, required during biogenesis of c-type cytochromes (cytochrome c6 and cytochrome f) at the step of heme attachment. In Calycanthus floridus var. glaucus (Eastern sweetshrub), this protein is Cytochrome c biogenesis protein CcsA.